Reading from the N-terminus, the 63-residue chain is MARQCEICGKKPMVGANVSHAHNVTKRRFNPNLQRVRAVRDGKPQTLYVCTNCIKSGFVVKAA.

It belongs to the bacterial ribosomal protein bL28 family.

The chain is Large ribosomal subunit protein bL28 from Desulfosudis oleivorans (strain DSM 6200 / JCM 39069 / Hxd3) (Desulfococcus oleovorans).